We begin with the raw amino-acid sequence, 245 residues long: tRNA pseudouridine synthase A (245 aa).

The active-site Nucleophile is the Asp52. Residue Tyr111 participates in substrate binding.

It belongs to the tRNA pseudouridine synthase TruA family. In terms of assembly, homodimer.

It carries out the reaction uridine(38/39/40) in tRNA = pseudouridine(38/39/40) in tRNA. Functionally, formation of pseudouridine at positions 38, 39 and 40 in the anticodon stem and loop of transfer RNAs. In Rhodospirillum centenum (strain ATCC 51521 / SW), this protein is tRNA pseudouridine synthase A.